Consider the following 118-residue polypeptide: Protein TusC (118 aa).

It belongs to the DsrF/TusC family. As to quaternary structure, heterohexamer, formed by a dimer of trimers. The hexameric TusBCD complex contains 2 copies each of TusB, TusC and TusD. The TusBCD complex interacts with TusE.

The protein resides in the cytoplasm. Part of a sulfur-relay system required for 2-thiolation of 5-methylaminomethyl-2-thiouridine (mnm(5)s(2)U) at tRNA wobble positions. The chain is Protein TusC from Salmonella arizonae (strain ATCC BAA-731 / CDC346-86 / RSK2980).